The sequence spans 394 residues: Dual specificity protein phosphatase 4 (394 aa).

N-acetylvaline is present on valine 2. Positions 41–159 (SGGKCLLLDC…FSSEYPEFCS (119 aa)) constitute a Rhodanese domain. The Tyrosine-protein phosphatase domain maps to 195–336 (GPVEILPFLY…LLQFESQVLA (142 aa)). The active-site Phosphocysteine intermediate is cysteine 280. Phosphoserine; by MAPK occurs at positions 386 and 391.

Belongs to the protein-tyrosine phosphatase family. Non-receptor class dual specificity subfamily. Hollow spherical complex composed of 24 subunits with pseudooctahedral symmetry, has a tetramer as the basic unit. In terms of processing, phosphorylation in the C-terminus by ERK1/2 inhibits proteasomal degradation and stabilizes the protein.

Its subcellular location is the nucleus. It carries out the reaction O-phospho-L-tyrosyl-[protein] + H2O = L-tyrosyl-[protein] + phosphate. The catalysed reaction is O-phospho-L-seryl-[protein] + H2O = L-seryl-[protein] + phosphate. It catalyses the reaction O-phospho-L-threonyl-[protein] + H2O = L-threonyl-[protein] + phosphate. Regulates mitogenic signal transduction by dephosphorylating both Thr and Tyr residues on MAP kinases ERK1 and ERK2. This chain is Dual specificity protein phosphatase 4 (DUSP4), found in Homo sapiens (Human).